Reading from the N-terminus, the 103-residue chain is MYAVIKTGGKQYKVAIGEKLKVEQIPADVDSQIVLEEVLMIADGEQVVVGAPLVSGATVKATVVSHGRGEKIRIFKMRRRKHYQKHQGHRQNYTEIRIDAISK.

The protein belongs to the bacterial ribosomal protein bL21 family. In terms of assembly, part of the 50S ribosomal subunit. Contacts protein L20.

This protein binds to 23S rRNA in the presence of protein L20. This Chromobacterium violaceum (strain ATCC 12472 / DSM 30191 / JCM 1249 / CCUG 213 / NBRC 12614 / NCIMB 9131 / NCTC 9757 / MK) protein is Large ribosomal subunit protein bL21.